The sequence spans 103 residues: Small ribosomal subunit protein uS10 (103 aa).

The protein belongs to the universal ribosomal protein uS10 family. As to quaternary structure, part of the 30S ribosomal subunit.

In terms of biological role, involved in the binding of tRNA to the ribosomes. This chain is Small ribosomal subunit protein uS10, found in Sphingopyxis alaskensis (strain DSM 13593 / LMG 18877 / RB2256) (Sphingomonas alaskensis).